A 270-amino-acid chain; its full sequence is Proteasome subunit beta (270 aa).

A propeptide spans 1–47 (removed in mature form; by autocatalysis); that stretch reads MSNRGRLGDAFLRPGSSSFLDFLSDHAPELLPGRSAAAGNAPLAPHA. The Nucleophile role is filled by threonine 48.

It belongs to the peptidase T1B family. In terms of assembly, the 20S proteasome core is composed of 14 alpha and 14 beta subunits that assemble into four stacked heptameric rings, resulting in a barrel-shaped structure. The two inner rings, each composed of seven catalytic beta subunits, are sandwiched by two outer rings, each composed of seven alpha subunits. The catalytic chamber with the active sites is on the inside of the barrel. Has a gated structure, the ends of the cylinder being occluded by the N-termini of the alpha-subunits. Is capped by the proteasome-associated ATPase, ARC.

The protein localises to the cytoplasm. The enzyme catalyses Cleavage of peptide bonds with very broad specificity.. The protein operates within protein degradation; proteasomal Pup-dependent pathway. The formation of the proteasomal ATPase ARC-20S proteasome complex, likely via the docking of the C-termini of ARC into the intersubunit pockets in the alpha-rings, may trigger opening of the gate for substrate entry. Interconversion between the open-gate and close-gate conformations leads to a dynamic regulation of the 20S proteasome proteolysis activity. In terms of biological role, component of the proteasome core, a large protease complex with broad specificity involved in protein degradation. This chain is Proteasome subunit beta, found in Xylanimonas cellulosilytica (strain DSM 15894 / JCM 12276 / CECT 5975 / KCTC 9989 / LMG 20990 / NBRC 107835 / XIL07).